The following is a 938-amino-acid chain: Histone deacetylase 7 (938 aa).

A disordered region spans residues 1–40; it reads MHSPGAGCPALQPDTPGSQPQPMDLRVGQRPTVEPPPEPA. The interval 1-121 is interaction with MEF2C; it reads MHSPGAGCPA…LAEVILKKQQ (121 aa). Transcription repression regions lie at residues 2-254 and 241-533; these read HSPG…DGDR and GPNP…EHAG. The segment at 72 to 172 is interaction with MEF2A; that stretch reads SMDPPMPELQ…LPTEPPEHFP (101 aa). Serine 132 carries the post-translational modification Phosphoserine. 4 disordered regions span residues 155–280, 331–361, 373–463, and 472–491; these read SFLP…HHGL, SGSGLHRPLNRTRSEPLPPSATASPLLAPLQ, LIKP…DSVL, and RPLSRTQSSPAAPVSLLSPE. Residue serine 178 is modified to Phosphoserine; by MARK2, MARK3 and PKD/PRKD1. The span at 190 to 204 shows a compositional bias: basic and acidic residues; the sequence is KSLERRKNPLLRKES. A Phosphoserine; by PKD/PRKD2 modification is found at serine 204. Positions 220 to 235 are enriched in low complexity; the sequence is SSPSSSSTPASGCSSP. Position 344 is a phosphoserine; by PKD/PRKD1 (serine 344). A phosphoserine mark is found at serine 350 and serine 398. A compositionally biased stretch (low complexity) spans 350 to 361; the sequence is SATASPLLAPLQ. 2 stretches are compositionally biased toward low complexity: residues 429–448 and 479–491; these read GRGSISLQQHQQVPPWEQQH and SSPAAPVSLLSPE. At serine 479 the chain carries Phosphoserine; by PKD/PRKD1. Residue serine 480 is modified to Phosphoserine. Residues 505–852 form a histone deacetylase region; the sequence is PATGLVYDSV…VAALLGNKVD (348 aa). The Zn(2+) site is built by cysteine 520, cysteine 522, and histidine 528. Serine 582 is modified (phosphoserine). Cysteine 605 lines the Zn(2+) pocket. Histidine 657 is an active-site residue. Residues 864–938 form an interaction with SIN3A region; it reads NLSAIRSLEA…LVEEEEPMNL (75 aa). The Nuclear export signal motif lies at 904 to 938; the sequence is AEVEAVTALASLSVGILAEDRPSERLVEEEEPMNL.

Belongs to the histone deacetylase family. HD type 2 subfamily. As to quaternary structure, interacts with HDAC1, HDAC2, HDAC3, HDAC4, HDAC5, NCOR1, NCOR2, SIN3A, SIN3B, RBBP4, RBBP7, MTA1L1, SAP30 and MBD3. Interacts with KAT5 and EDNRA. Interacts with the 14-3-3 protein YWHAE, MEF2A, MEF2B and MEF2C. Interacts with ZMYND15. Interacts with KDM5B. Interacts with PML. Interacts with FOXP3. Interacts with RARA. May be phosphorylated by CaMK1. Phosphorylated by the PKC kinases PKN1 and PKN2, impairing nuclear import. Phosphorylation at Ser-178 by MARK2, MARK3 and PRKD1 promotes interaction with 14-3-3 proteins and export from the nucleus. Phosphorylation at Ser-178 is a prerequisite for phosphorylation at Ser-204. In terms of tissue distribution, highly expressed in heart and lung. Expressed at intermediate level in muscle.

The protein localises to the nucleus. Its subcellular location is the cytoplasm. It carries out the reaction N(6)-acetyl-L-lysyl-[histone] + H2O = L-lysyl-[histone] + acetate. The enzyme catalyses N(6)-acetyl-L-lysyl-[protein] + H2O = L-lysyl-[protein] + acetate. With respect to regulation, its activity is inhibited by Trichostatin A (TSA), a known histone deacetylase inhibitor. Functionally, responsible for the deacetylation of lysine residues on the N-terminal part of the core histones (H2A, H2B, H3 and H4). Histone deacetylation gives a tag for epigenetic repression and plays an important role in transcriptional regulation, cell cycle progression and developmental events. Histone deacetylases act via the formation of large multiprotein complexes. Involved in muscle maturation by repressing transcription of myocyte enhancer factors such as MEF2A, MEF2B and MEF2C. During muscle differentiation, it shuttles into the cytoplasm, allowing the expression of myocyte enhancer factors. Positively regulates the transcriptional repressor activity of FOXP3. Serves as a corepressor of RARA, causing its deacetylation and inhibition of RARE DNA element binding. In association with RARA, plays a role in the repression of microRNA-10a and thereby in the inflammatory response. Also acetylates non-histone proteins, such as ALKBH5. This Mus musculus (Mouse) protein is Histone deacetylase 7 (Hdac7).